We begin with the raw amino-acid sequence, 205 residues long: Golgi to ER traffic protein 1 (205 aa).

Topologically, residues 1-9 (MFELQPSSI) are lumenal. Residues 10-29 (VVLVFCVLAIKVCISLIGKT) traverse the membrane as a helical segment. Topologically, residues 30–116 (TIQDRIWYLY…QISKLVNLAI (87 aa)) are cytoplasmic. Residues 53–103 (ALAQKREELVRVNKERRAISAQDEYAKWTKLNRQFDKLNSEVNDLAEATSS) adopt a coiled-coil conformation. Residues 117–137 (AATTTAPIWFSRIWYRKVVLF) traverse the membrane as a helical segment. Residues 138-161 (YLPPKVFPYYIEWVLALPFIVTGG) lie on the Lumenal side of the membrane. Residues 162–178 (VGLTVWMFALNSVLSSL) form a helical membrane-spanning segment. Residues 179–205 (EFLIKFYLEEPVKKPEAPAASEAQTKQ) are Cytoplasmic-facing.

Belongs to the WRB/GET1 family. As to quaternary structure, component of the Golgi to ER traffic (GET) complex, which is composed of GET1, GET2 and GET3. Within the complex, GET1 and GET2 form a heterotetramer which is stabilized by phosphatidylinositol binding and which binds to the GET3 homodimer.

The protein resides in the endoplasmic reticulum membrane. Its subcellular location is the golgi apparatus membrane. Required for the post-translational delivery of tail-anchored (TA) proteins to the endoplasmic reticulum. Together with GET2, acts as a membrane receptor for soluble GET3, which recognizes and selectively binds the transmembrane domain of TA proteins in the cytosol. The GET complex cooperates with the HDEL receptor ERD2 to mediate the ATP-dependent retrieval of resident ER proteins that contain a C-terminal H-D-E-L retention signal from the Golgi to the ER. The sequence is that of Golgi to ER traffic protein 1 from Clavispora lusitaniae (strain ATCC 42720) (Yeast).